The primary structure comprises 269 residues: Cytochrome c oxidase subunit 3 (269 aa).

Transmembrane regions (helical) follow at residues 21–41 (PWPI…GLTM), 45–65 (IVGN…MTMW), 90–110 (GFLL…WAYF), 127–147 (VGIT…ILLA), 167–187 (ALNG…CQYI), 204–224 (VFFA…IMLA), and 247–267 (ILYL…MYWW).

The protein belongs to the cytochrome c oxidase subunit 3 family. In terms of assembly, component of the cytochrome c oxidase (complex IV, CIV), a multisubunit enzyme composed of a catalytic core of 3 subunits and several supernumerary subunits. The complex exists as a monomer or a dimer and forms supercomplexes (SCs) in the inner mitochondrial membrane with ubiquinol-cytochrome c oxidoreductase (cytochrome b-c1 complex, complex III, CIII).

It is found in the mitochondrion inner membrane. It catalyses the reaction 4 Fe(II)-[cytochrome c] + O2 + 8 H(+)(in) = 4 Fe(III)-[cytochrome c] + 2 H2O + 4 H(+)(out). Functionally, component of the cytochrome c oxidase, the last enzyme in the mitochondrial electron transport chain which drives oxidative phosphorylation. The respiratory chain contains 3 multisubunit complexes succinate dehydrogenase (complex II, CII), ubiquinol-cytochrome c oxidoreductase (cytochrome b-c1 complex, complex III, CIII) and cytochrome c oxidase (complex IV, CIV), that cooperate to transfer electrons derived from NADH and succinate to molecular oxygen, creating an electrochemical gradient over the inner membrane that drives transmembrane transport and the ATP synthase. Cytochrome c oxidase is the component of the respiratory chain that catalyzes the reduction of oxygen to water. Electrons originating from reduced cytochrome c in the intermembrane space (IMS) are transferred via the dinuclear copper A center (CU(A)) of subunit 2 and heme A of subunit 1 to the active site in subunit 1, a binuclear center (BNC) formed by heme A3 and copper B (CU(B)). The BNC reduces molecular oxygen to 2 water molecules using 4 electrons from cytochrome c in the IMS and 4 protons from the mitochondrial matrix. The polypeptide is Cytochrome c oxidase subunit 3 (COX3) (Wickerhamomyces canadensis (Yeast)).